The following is a 444-amino-acid chain: ATP-dependent protease ATPase subunit HslU (444 aa).

ATP-binding positions include Ile-18, 60–65 (GVGKTE), Asp-256, Glu-322, and Arg-394.

Belongs to the ClpX chaperone family. HslU subfamily. In terms of assembly, a double ring-shaped homohexamer of HslV is capped on each side by a ring-shaped HslU homohexamer. The assembly of the HslU/HslV complex is dependent on binding of ATP.

It localises to the cytoplasm. Functionally, ATPase subunit of a proteasome-like degradation complex; this subunit has chaperone activity. The binding of ATP and its subsequent hydrolysis by HslU are essential for unfolding of protein substrates subsequently hydrolyzed by HslV. HslU recognizes the N-terminal part of its protein substrates and unfolds these before they are guided to HslV for hydrolysis. The sequence is that of ATP-dependent protease ATPase subunit HslU from Klebsiella pneumoniae (strain 342).